The primary structure comprises 292 residues: Ribosomal protein L11 methyltransferase (292 aa).

S-adenosyl-L-methionine is bound by residues threonine 136, glycine 159, aspartate 181, and asparagine 228.

Belongs to the methyltransferase superfamily. PrmA family.

It localises to the cytoplasm. It carries out the reaction L-lysyl-[protein] + 3 S-adenosyl-L-methionine = N(6),N(6),N(6)-trimethyl-L-lysyl-[protein] + 3 S-adenosyl-L-homocysteine + 3 H(+). Functionally, methylates ribosomal protein L11. The sequence is that of Ribosomal protein L11 methyltransferase from Rhizobium rhizogenes (strain K84 / ATCC BAA-868) (Agrobacterium radiobacter).